The primary structure comprises 191 residues: Inosine triphosphate pyrophosphatase (191 aa).

Position 12-17 (12-17) interacts with ITP; the sequence is TGNANK. Glu-42 contacts Mg(2+). ITP-binding positions include Lys-54, 70-71, Lys-87, 145-148, Lys-168, and 173-174; these read DT, FGWD, and HR.

This sequence belongs to the HAM1 NTPase family. Homodimer. The cofactor is Mg(2+). Requires Mn(2+) as cofactor.

It is found in the cytoplasm. The enzyme catalyses ITP + H2O = IMP + diphosphate + H(+). It catalyses the reaction dITP + H2O = dIMP + diphosphate + H(+). The catalysed reaction is XTP + H2O = XMP + diphosphate + H(+). Functionally, pyrophosphatase that hydrolyzes non-canonical purine nucleotides such as inosine triphosphate (ITP), deoxyinosine triphosphate (dITP) or xanthosine 5'-triphosphate (XTP) to their respective monophosphate derivatives. The enzyme does not distinguish between the deoxy- and ribose forms. Probably excludes non-canonical purines from RNA and DNA precursor pools, thus preventing their incorporation into RNA and DNA and avoiding chromosomal lesions. In Phytophthora infestans (strain T30-4) (Potato late blight agent), this protein is Inosine triphosphate pyrophosphatase.